The following is a 421-amino-acid chain: Histidine--tRNA ligase (421 aa).

Belongs to the class-II aminoacyl-tRNA synthetase family. In terms of assembly, homodimer.

The protein resides in the cytoplasm. The catalysed reaction is tRNA(His) + L-histidine + ATP = L-histidyl-tRNA(His) + AMP + diphosphate + H(+). This chain is Histidine--tRNA ligase, found in Francisella tularensis subsp. novicida (strain U112).